The following is a 177-amino-acid chain: MSEFVTVARPYAKAAFDFAVEHQSVERWQDMLAFAAEVTKNEQMAELLSGALAPETLAESFIAVCGEQLDENGQNLIRVMAENNRLNALPDVLEQFIHLRAASEATSEVEVTSATALSEEQLSKISAAMEKRLSRKVKLNCKIDKSVMAGVIIRAGDMVIDGSVRGRLERLADVLQS.

It belongs to the ATPase delta chain family. In terms of assembly, F-type ATPases have 2 components, F(1) - the catalytic core - and F(0) - the membrane proton channel. F(1) has five subunits: alpha(3), beta(3), gamma(1), delta(1), epsilon(1). F(0) has three main subunits: a(1), b(2) and c(10-14). The alpha and beta chains form an alternating ring which encloses part of the gamma chain. F(1) is attached to F(0) by a central stalk formed by the gamma and epsilon chains, while a peripheral stalk is formed by the delta and b chains.

The protein localises to the cell inner membrane. In terms of biological role, f(1)F(0) ATP synthase produces ATP from ADP in the presence of a proton or sodium gradient. F-type ATPases consist of two structural domains, F(1) containing the extramembraneous catalytic core and F(0) containing the membrane proton channel, linked together by a central stalk and a peripheral stalk. During catalysis, ATP synthesis in the catalytic domain of F(1) is coupled via a rotary mechanism of the central stalk subunits to proton translocation. Its function is as follows. This protein is part of the stalk that links CF(0) to CF(1). It either transmits conformational changes from CF(0) to CF(1) or is implicated in proton conduction. The protein is ATP synthase subunit delta of Salmonella agona (strain SL483).